We begin with the raw amino-acid sequence, 602 residues long: Elongation factor 4 (602 aa).

The tr-type G domain occupies 6 to 188; it reads DHIRNFSIVA…AIVNKLPAPK (183 aa). GTP contacts are provided by residues 18-23 and 135-138; these read DHGKST and NKID.

Belongs to the TRAFAC class translation factor GTPase superfamily. Classic translation factor GTPase family. LepA subfamily.

The protein localises to the cell inner membrane. It catalyses the reaction GTP + H2O = GDP + phosphate + H(+). Functionally, required for accurate and efficient protein synthesis under certain stress conditions. May act as a fidelity factor of the translation reaction, by catalyzing a one-codon backward translocation of tRNAs on improperly translocated ribosomes. Back-translocation proceeds from a post-translocation (POST) complex to a pre-translocation (PRE) complex, thus giving elongation factor G a second chance to translocate the tRNAs correctly. Binds to ribosomes in a GTP-dependent manner. The protein is Elongation factor 4 of Brucella melitensis biotype 2 (strain ATCC 23457).